We begin with the raw amino-acid sequence, 471 residues long: MTDLPDNTRWQLWIVAFGFFMQSLDTTIVNTALPSMAQSLGESPLHMHMVIVSYVLTVAVMLPASGWLADKVGVRNIFFTAIVLFTLGSLFCALSGTLNELLLARALQGVGGAMMVPVGRLTVMKIVPREQYMAAMTFVTLPGQVGPLLGPALGGLLVEYASWHWIFLINIPVGIIGAIATLMLMPNYTMQTRRFDLSGFLLLAIGMAVLTLALDGSKGTGLSPLAITGLVAVGVVALVLYLLHARNNNRALFSLKLFRTRTFSLGLAGSFAGRIGSGMLPFMTPVFLQIGLGFSPFHAGLMMIPMVLGSMGMKRIVVQVVNRFGYRRVLVATTLGLSLVTLLFMTTALLGWYYVLPFVLFLQGMVNSTRFSSMNTLTLKDLPDNLASSGNSLLSMIMQLSMSIGVTIAGLLLGLFGSQHVSVDSGTTQTVFMYTWLSMAFIIALPAFIFARVPNDTHQNVAISRRKRSAQ.

Residues 1–11 (MTDLPDNTRWQ) lie on the Periplasmic side of the membrane. A helical membrane pass occupies residues 12–32 (LWIVAFGFFMQSLDTTIVNTA). Residues 33–48 (LPSMAQSLGESPLHMH) are Cytoplasmic-facing. The chain crosses the membrane as a helical span at residues 49–69 (MVIVSYVLTVAVMLPASGWLA). Residues 70–76 (DKVGVRN) are Periplasmic-facing. The chain crosses the membrane as a helical span at residues 77-97 (IFFTAIVLFTLGSLFCALSGT). The Cytoplasmic segment spans residues 98–101 (LNEL). The chain crosses the membrane as a helical span at residues 102–124 (LLARALQGVGGAMMVPVGRLTVM). The Periplasmic portion of the chain corresponds to 125–137 (KIVPREQYMAAMT). Residues 138-158 (FVTLPGQVGPLLGPALGGLLV) traverse the membrane as a helical segment. The Cytoplasmic segment spans residues 159–164 (EYASWH). A helical transmembrane segment spans residues 165–185 (WIFLINIPVGIIGAIATLMLM). The Periplasmic segment spans residues 186 to 196 (PNYTMQTRRFD). Residues 197–217 (LSGFLLLAIGMAVLTLALDGS) traverse the membrane as a helical segment. The Cytoplasmic portion of the chain corresponds to 218-224 (KGTGLSP). Residues 225–245 (LAITGLVAVGVVALVLYLLHA) form a helical membrane-spanning segment. The Periplasmic portion of the chain corresponds to 246 to 262 (RNNNRALFSLKLFRTRT). The chain crosses the membrane as a helical span at residues 263-283 (FSLGLAGSFAGRIGSGMLPFM). The Cytoplasmic segment spans residues 284 to 285 (TP). Residues 286–306 (VFLQIGLGFSPFHAGLMMIPM) form a helical membrane-spanning segment. The Periplasmic portion of the chain corresponds to 307 to 341 (VLGSMGMKRIVVQVVNRFGYRRVLVATTLGLSLVT). Residues 342–362 (LLFMTTALLGWYYVLPFVLFL) form a helical membrane-spanning segment. Over 363–395 (QGMVNSTRFSSMNTLTLKDLPDNLASSGNSLLS) the chain is Cytoplasmic. The chain crosses the membrane as a helical span at residues 396-416 (MIMQLSMSIGVTIAGLLLGLF). At 417 to 430 (GSQHVSVDSGTTQT) the chain is on the periplasmic side. Residues 431-451 (VFMYTWLSMAFIIALPAFIFA) traverse the membrane as a helical segment. Over 452–471 (RVPNDTHQNVAISRRKRSAQ) the chain is Cytoplasmic.

This sequence belongs to the major facilitator superfamily. TCR/Tet family.

It is found in the cell inner membrane. This chain is Putative multidrug resistance protein MdtD, found in Escherichia coli O17:K52:H18 (strain UMN026 / ExPEC).